The primary structure comprises 374 residues: Regulator of G-protein signaling 20 (374 aa).

Polar residues predominate over residues 1–11; sequence MPRLSQDNQQG. Disordered regions lie at residues 1 to 21 and 135 to 158; these read MPRLSQDNQQGHQKHFSRPSR and PPGGRLPREVDASAGQSSSIPPMG. Over residues 12–21 the composition is skewed to basic residues; the sequence is HQKHFSRPSR. Residues 248 to 364 form the RGS domain; the sequence is SFDKLMLTPA…MNSALYKDLL (117 aa).

As to quaternary structure, forms a complex with G(alpha)z/i2 subunits and mu-opioid receptors; the formation of this complex results in mu-opioid receptor desensitization. Interacts with OPRM1. Fatty acylated. Heavily palmitoylated in the cysteine string motif. Post-translationally, N- and O-glycosylated in synapsomal membranes. In terms of processing, serine phosphorylated in synapsomal membranes. Sumoylated with SUMO1 and SUMO2 in synaptosomes. The sumoylated forms act as a scaffold for sequestering mu-opioid receptor-activated G(alpha) subunits. Retinal-specific. Expressed throughout the retina, including photoreceptors.

It is found in the membrane. The protein resides in the nucleus. It localises to the cytoplasm. Inhibits signal transduction by increasing the GTPase activity of G protein alpha subunits thereby driving them into their inactive GDP-bound form. Binds selectively to G(z)-alpha and G(alpha)-i2 subunits, accelerates their GTPase activity and regulates their signaling activities. The G(z)-alpha activity is inhibited by the phosphorylation and palmitoylation of the G-protein. Negatively regulates mu-opioid receptor-mediated activation of the G-proteins. The sequence is that of Regulator of G-protein signaling 20 (RGS20) from Bos taurus (Bovine).